The following is a 555-amino-acid chain: 2-succinyl-5-enolpyruvyl-6-hydroxy-3-cyclohexene-1-carboxylate synthase (555 aa).

Belongs to the TPP enzyme family. MenD subfamily. As to quaternary structure, homodimer. The cofactor is Mg(2+). Mn(2+) is required as a cofactor. It depends on thiamine diphosphate as a cofactor.

It carries out the reaction isochorismate + 2-oxoglutarate + H(+) = 5-enolpyruvoyl-6-hydroxy-2-succinyl-cyclohex-3-ene-1-carboxylate + CO2. The protein operates within quinol/quinone metabolism; 1,4-dihydroxy-2-naphthoate biosynthesis; 1,4-dihydroxy-2-naphthoate from chorismate: step 2/7. Its pathway is quinol/quinone metabolism; menaquinone biosynthesis. In terms of biological role, catalyzes the thiamine diphosphate-dependent decarboxylation of 2-oxoglutarate and the subsequent addition of the resulting succinic semialdehyde-thiamine pyrophosphate anion to isochorismate to yield 2-succinyl-5-enolpyruvyl-6-hydroxy-3-cyclohexene-1-carboxylate (SEPHCHC). This Cronobacter sakazakii (strain ATCC BAA-894) (Enterobacter sakazakii) protein is 2-succinyl-5-enolpyruvyl-6-hydroxy-3-cyclohexene-1-carboxylate synthase.